Here is a 37-residue protein sequence, read N- to C-terminus: Large ribosomal subunit protein bL36 (37 aa).

It belongs to the bacterial ribosomal protein bL36 family.

This chain is Large ribosomal subunit protein bL36, found in Cyanothece sp. (strain PCC 7425 / ATCC 29141).